We begin with the raw amino-acid sequence, 400 residues long: 3-phenylpropionate/cinnamic acid dioxygenase ferredoxin--NAD(+) reductase component (400 aa).

5–36 is a binding site for FAD; the sequence is TIIIVGGGQAAAMAAASLRQQGFTGELHLFSD. 146–174 contacts NAD(+); the sequence is SVVIVGAGTIGLELAASATQRRCKVTVIE.

The protein belongs to the bacterial ring-hydroxylating dioxygenase ferredoxin reductase family. In terms of assembly, this dioxygenase system consists of four proteins: the two subunits of the hydroxylase component (HcaE and HcaF), a ferredoxin (HcaC) and a ferredoxin reductase (HcaD). Requires FAD as cofactor.

The enzyme catalyses 2 reduced [2Fe-2S]-[ferredoxin] + NAD(+) + H(+) = 2 oxidized [2Fe-2S]-[ferredoxin] + NADH. The protein operates within aromatic compound metabolism; 3-phenylpropanoate degradation. In terms of biological role, part of the multicomponent 3-phenylpropionate dioxygenase, that converts 3-phenylpropionic acid (PP) and cinnamic acid (CI) into 3-phenylpropionate-dihydrodiol (PP-dihydrodiol) and cinnamic acid-dihydrodiol (CI-dihydrodiol), respectively. The polypeptide is 3-phenylpropionate/cinnamic acid dioxygenase ferredoxin--NAD(+) reductase component (Escherichia coli (strain 55989 / EAEC)).